The chain runs to 404 residues: Schlafen-like protein 1 (404 aa).

2 disordered regions span residues 1–31 and 139–170; these read MTPMKRSVQTQVSEPFTESWGEESLPELPTE and GPLSHREEEEEDSGLSPGPNPGSGVPLPAWPT. A compositionally biased stretch (polar residues) spans 7-16; that stretch reads SVQTQVSEPF. Positions 152–165 are enriched in low complexity; that stretch reads GLSPGPNPGSGVPL. 258-265 serves as a coordination point for ATP; sequence GVEDSGLV. A coiled-coil region spans residues 365 to 395; it reads RWLVELGKLEERVKVLTMEKEQLQQQLQQHG.

The protein belongs to the Schlafen family. Subgroup I subfamily.

In Macaca fascicularis (Crab-eating macaque), this protein is Schlafen-like protein 1 (SLFNL1).